The primary structure comprises 555 residues: Phosphomethylpyrimidine synthase (555 aa).

Substrate-binding positions include asparagine 191, methionine 220, tyrosine 249, histidine 285, 305-307 (SRG), 346-349 (DGLR), and glutamate 385. Histidine 389 is a binding site for Zn(2+). Substrate is bound at residue tyrosine 412. Residue histidine 453 coordinates Zn(2+). [4Fe-4S] cluster contacts are provided by cysteine 533, cysteine 536, and cysteine 541.

The protein belongs to the ThiC family. As to quaternary structure, homodimer. The cofactor is [4Fe-4S] cluster.

The catalysed reaction is 5-amino-1-(5-phospho-beta-D-ribosyl)imidazole + S-adenosyl-L-methionine = 4-amino-2-methyl-5-(phosphooxymethyl)pyrimidine + CO + 5'-deoxyadenosine + formate + L-methionine + 3 H(+). Its pathway is cofactor biosynthesis; thiamine diphosphate biosynthesis. Functionally, catalyzes the synthesis of the hydroxymethylpyrimidine phosphate (HMP-P) moiety of thiamine from aminoimidazole ribotide (AIR) in a radical S-adenosyl-L-methionine (SAM)-dependent reaction. This chain is Phosphomethylpyrimidine synthase, found in Ehrlichia ruminantium (strain Welgevonden).